Reading from the N-terminus, the 480-residue chain is UDP-N-acetylmuramoylalanine--D-glutamate ligase (480 aa).

Residue 120–126 (GTNGKTT) coordinates ATP.

This sequence belongs to the MurCDEF family.

It is found in the cytoplasm. It catalyses the reaction UDP-N-acetyl-alpha-D-muramoyl-L-alanine + D-glutamate + ATP = UDP-N-acetyl-alpha-D-muramoyl-L-alanyl-D-glutamate + ADP + phosphate + H(+). Its pathway is cell wall biogenesis; peptidoglycan biosynthesis. In terms of biological role, cell wall formation. Catalyzes the addition of glutamate to the nucleotide precursor UDP-N-acetylmuramoyl-L-alanine (UMA). The polypeptide is UDP-N-acetylmuramoylalanine--D-glutamate ligase (Nocardia farcinica (strain IFM 10152)).